We begin with the raw amino-acid sequence, 254 residues long: Vesicle transport protein USE1 (254 aa).

The Cytoplasmic portion of the chain corresponds to 1–228 (MAYISENELK…AYKCGYDCFK (228 aa)). A helical; Anchor for type IV membrane protein transmembrane segment spans residues 229–249 (VMLIVLIFMSFVSMVLMMKIF). Residues 250 to 254 (KKAST) are Lumenal-facing.

The protein belongs to the USE1 family.

It localises to the endoplasmic reticulum membrane. SNARE that may be involved in targeting and fusion of Golgi-derived retrograde transport vesicles with the ER. The chain is Vesicle transport protein USE1 from Caenorhabditis elegans.